Consider the following 198-residue polypeptide: Imidazoleglycerol-phosphate dehydratase (198 aa).

Belongs to the imidazoleglycerol-phosphate dehydratase family.

It is found in the cytoplasm. It catalyses the reaction D-erythro-1-(imidazol-4-yl)glycerol 3-phosphate = 3-(imidazol-4-yl)-2-oxopropyl phosphate + H2O. It functions in the pathway amino-acid biosynthesis; L-histidine biosynthesis; L-histidine from 5-phospho-alpha-D-ribose 1-diphosphate: step 6/9. This chain is Imidazoleglycerol-phosphate dehydratase, found in Gluconobacter oxydans (strain 621H) (Gluconobacter suboxydans).